Consider the following 865-residue polypeptide: Alanine--tRNA ligase (865 aa).

His568, His572, Cys670, and His674 together coordinate Zn(2+).

This sequence belongs to the class-II aminoacyl-tRNA synthetase family. Zn(2+) serves as cofactor.

Its subcellular location is the cytoplasm. The enzyme catalyses tRNA(Ala) + L-alanine + ATP = L-alanyl-tRNA(Ala) + AMP + diphosphate. In terms of biological role, catalyzes the attachment of alanine to tRNA(Ala) in a two-step reaction: alanine is first activated by ATP to form Ala-AMP and then transferred to the acceptor end of tRNA(Ala). Also edits incorrectly charged Ser-tRNA(Ala) and Gly-tRNA(Ala) via its editing domain. This Vibrio campbellii (strain ATCC BAA-1116) protein is Alanine--tRNA ligase.